A 79-amino-acid polypeptide reads, in one-letter code: Defensin-1 (79 aa).

Positions 1-23 are cleaved as a signal peptide; it reads MKFLNVVAIALLVVACLAVYSNA. Intrachain disulfides connect C42–C69, C55–C75, and C59–C77.

This sequence belongs to the invertebrate defensin family. Type 1 subfamily.

It is found in the secreted. This is Defensin-1 (SMD1) from Stomoxys calcitrans (Stable fly).